A 179-amino-acid chain; its full sequence is ATP-dependent protease subunit HslV (179 aa).

The active site involves Thr-7. Residues Gly-162, Cys-165, and Thr-168 each coordinate Na(+).

This sequence belongs to the peptidase T1B family. HslV subfamily. As to quaternary structure, a double ring-shaped homohexamer of HslV is capped on each side by a ring-shaped HslU homohexamer. The assembly of the HslU/HslV complex is dependent on binding of ATP.

It localises to the cytoplasm. It carries out the reaction ATP-dependent cleavage of peptide bonds with broad specificity.. With respect to regulation, allosterically activated by HslU binding. In terms of biological role, protease subunit of a proteasome-like degradation complex believed to be a general protein degrading machinery. This is ATP-dependent protease subunit HslV from Saccharophagus degradans (strain 2-40 / ATCC 43961 / DSM 17024).